The sequence spans 172 residues: Large ribosomal subunit protein uL10 (172 aa).

Belongs to the universal ribosomal protein uL10 family. As to quaternary structure, part of the ribosomal stalk of the 50S ribosomal subunit. The N-terminus interacts with L11 and the large rRNA to form the base of the stalk. The C-terminus forms an elongated spine to which L12 dimers bind in a sequential fashion forming a multimeric L10(L12)X complex.

Forms part of the ribosomal stalk, playing a central role in the interaction of the ribosome with GTP-bound translation factors. The protein is Large ribosomal subunit protein uL10 of Parvibaculum lavamentivorans (strain DS-1 / DSM 13023 / NCIMB 13966).